Reading from the N-terminus, the 178-residue chain is Prion-like protein doppel (178 aa).

An N-terminal signal peptide occupies residues 1-25 (MRKHLGGCWLAIVCVLLFSQLSSVK). The interval 27–50 (RGIKHRIKWNRKVLPSTSQVTEAH) is flexible tail. Residues 51-154 (TAEIRPGAFI…KHCDFWLERG (104 aa)) form a globular region. 2 cysteine pairs are disulfide-bonded: Cys-94–Cys-147 and Cys-108–Cys-142. Asn-98 and Asn-110 each carry an N-linked (GlcNAc...) asparagine glycan. Positions 124-141 (KQDNKLYQRVLWQLIREL) are cu(2+) binding. Residue Gly-154 is the site of GPI-anchor amidated glycine attachment. A propeptide spans 155–178 (AGLQVTLDQPMMLCLLVFIWFIVK) (removed in mature form).

This sequence belongs to the prion family. N-glycosylated. In terms of processing, O-glycosylated. In terms of tissue distribution, strongly expressed in testis. Detected at low levels in lymph node, spleen and ovary.

It is found in the cell membrane. Its function is as follows. Required for normal acrosome reaction and for normal male fertility. Can bind Cu(2+). The protein is Prion-like protein doppel (PRND) of Ovis aries (Sheep).